The following is a 441-amino-acid chain: 23S rRNA (uracil(1939)-C(5))-methyltransferase RlmD (441 aa).

A TRAM domain is found at methionine 1–glutamate 56. Residues cysteine 69, cysteine 75, cysteine 78, and cysteine 157 each coordinate [4Fe-4S] cluster. Residues glutamine 265, phenylalanine 294, asparagine 299, glutamate 315, asparagine 343, and aspartate 364 each coordinate S-adenosyl-L-methionine. Catalysis depends on cysteine 397, which acts as the Nucleophile.

The protein belongs to the class I-like SAM-binding methyltransferase superfamily. RNA M5U methyltransferase family. RlmD subfamily.

It catalyses the reaction uridine(1939) in 23S rRNA + S-adenosyl-L-methionine = 5-methyluridine(1939) in 23S rRNA + S-adenosyl-L-homocysteine + H(+). Catalyzes the formation of 5-methyl-uridine at position 1939 (m5U1939) in 23S rRNA. The chain is 23S rRNA (uracil(1939)-C(5))-methyltransferase RlmD from Cupriavidus necator (strain ATCC 17699 / DSM 428 / KCTC 22496 / NCIMB 10442 / H16 / Stanier 337) (Ralstonia eutropha).